Here is a 253-residue protein sequence, read N- to C-terminus: Matrix protein (253 aa).

Residues 1–26 form a disordered region; the sequence is MLSRIKQGIKTKRSSSSSSSRSKTGD. The PTAP/PSAP motif motif lies at 55-58; the sequence is PTAP.

As to quaternary structure, homomultimer. Interacts with viral nucleocapsid. Interacts with host TSG101.

It localises to the virion membrane. The protein localises to the host endomembrane system. Its subcellular location is the host nucleus membrane. In terms of biological role, plays a major role in assembly and budding of virion, by recruiting cellular partners of the ESCRT complexes that play a key role in releasing the budding particle from the host membrane. Condensates the ribonucleocapsid core during virus assembly. The protein is Matrix protein (M) of Bos taurus (Bovine).